The primary structure comprises 394 residues: MKDYTYSVTEINEYIKDLIEGDPYLTNVSVYGEISGVRPRKGHIFFSLVEENARLECVIFGGDNMGIRLQEGRMALVEGSVSVYIPHGTYRFICSNVRYLDQAGMYQIKFETTLKKLLEEGLLSRPKKTVPRFPRKIGIITSRDSAALQDVIRTARERKAPIEIYVFHTSVQGDSAREELIKALRKANEYDLDLVMIVRGGGSKEDLWVFNEEDVIREILRLRHPVVTGIGHEIDRVIADFVADVSMHTPTGAAEYVIPDASEIHEDLDSFFEKLITSLSNRFDMEERRLETLYFRLRMIGRRKLELNEFKIERVKELAAKLRKKLMDYFEHNQKKLDSLGRMLESLNPLRPLERGFVLVKKDEKIVKESTDLKRGDVVSLVFKDGTKKAQVIG.

Belongs to the XseA family. In terms of assembly, heterooligomer composed of large and small subunits.

It is found in the cytoplasm. The catalysed reaction is Exonucleolytic cleavage in either 5'- to 3'- or 3'- to 5'-direction to yield nucleoside 5'-phosphates.. Bidirectionally degrades single-stranded DNA into large acid-insoluble oligonucleotides, which are then degraded further into small acid-soluble oligonucleotides. The protein is Exodeoxyribonuclease 7 large subunit of Thermotoga maritima (strain ATCC 43589 / DSM 3109 / JCM 10099 / NBRC 100826 / MSB8).